Here is a 400-residue protein sequence, read N- to C-terminus: Elongation factor Tu (400 aa).

The tr-type G domain maps to 10-209 (KPHVNVGTIG…AVDSYIPTPE (200 aa)). Residues 19–26 (GHVDHGKT) are G1. A GTP-binding site is contributed by 19 to 26 (GHVDHGKT). Thr26 provides a ligand contact to Mg(2+). The interval 60–64 (GITIS) is G2. Positions 81 to 84 (DCPG) are G3. Residues 81–85 (DCPGH) and 136–139 (NKAD) contribute to the GTP site. Residues 136–139 (NKAD) form a G4 region. The segment at 174 to 176 (SGL) is G5.

It belongs to the TRAFAC class translation factor GTPase superfamily. Classic translation factor GTPase family. EF-Tu/EF-1A subfamily. Monomer.

It is found in the cytoplasm. The catalysed reaction is GTP + H2O = GDP + phosphate + H(+). In terms of biological role, GTP hydrolase that promotes the GTP-dependent binding of aminoacyl-tRNA to the A-site of ribosomes during protein biosynthesis. The protein is Elongation factor Tu of Desulfitobacterium hafniense (strain DSM 10664 / DCB-2).